A 261-amino-acid polypeptide reads, in one-letter code: High-affinity zinc uptake system membrane protein ZnuB (261 aa).

Residues 1–7 (MIELLFP) lie on the Periplasmic side of the membrane. A helical transmembrane segment spans residues 8–28 (GWLAGIMLACAAGPLGSFVVW). Residues 29–53 (RRMSYFGDTLAHASLLGVAFGLLLD) lie on the Cytoplasmic side of the membrane. The helical transmembrane segment at 54–74 (VNPFYAVIAVTLLLAGGLVWL) threads the bilayer. The Periplasmic segment spans residues 75-83 (EKRPQLAID). A helical transmembrane segment spans residues 84 to 104 (TLLGIMAHSALSLGLVVVSLM). Topologically, residues 105–121 (SNIRVDLMAYLFGDLLA) are cytoplasmic. The chain crosses the membrane as a helical span at residues 122 to 142 (VTPEDLISIAIGVVIVVAILF). The Periplasmic portion of the chain corresponds to 143-177 (WQWRNLLSMTISPDLAFVDGVKLQRVKLLLMLVTA). A helical transmembrane segment spans residues 178-198 (LTIGVAMKFVGALIITSLLII). The Cytoplasmic portion of the chain corresponds to 199-213 (PAATARRFARTPEQM). Residues 214–234 (AGVAVLVGMVAVTGGLTFSAV) form a helical membrane-spanning segment. A topological domain (periplasmic) is located at residue tyrosine 235. A helical transmembrane segment spans residues 236-256 (DTPAGPSVVLCAALLFILSMM). The Cytoplasmic portion of the chain corresponds to 257-261 (KKQAS).

It belongs to the ABC-3 integral membrane protein family.

Its subcellular location is the cell inner membrane. Its function is as follows. Involved in the high-affinity zinc uptake transport system. The sequence is that of High-affinity zinc uptake system membrane protein ZnuB (znuB) from Escherichia coli (strain K12).